Consider the following 130-residue polypeptide: Small ribosomal subunit protein uS9 (130 aa).

This sequence belongs to the universal ribosomal protein uS9 family.

The sequence is that of Small ribosomal subunit protein uS9 from Geotalea daltonii (strain DSM 22248 / JCM 15807 / FRC-32) (Geobacter daltonii).